A 61-amino-acid polypeptide reads, in one-letter code: TMCYSHTTTSRAILTNCGENSCYRKSRRHPPKMVLGRGCGCPPGDDNLEVKCCTSPDKCNY.

4 cysteine pairs are disulfide-bonded: Cys-3/Cys-22, Cys-17/Cys-39, Cys-41/Cys-52, and Cys-53/Cys-59.

Belongs to the three-finger toxin family. Short-chain subfamily. Acn-esterase inhibitor sub-subfamily. As to expression, expressed by the venom gland.

It is found in the secreted. In terms of biological role, interferes with neuromuscular transmission by inhibiting the enzyme acetylcholinesterase (AChE) present at the neuromuscular junction. It selectively binds and inhibits with a 1:1 stoichiometry the mammalian and electric fish AChE at picomolar concentrations. It is highly specific for the peripheral site of AChE and blocks the entry of acetylcholine into the active site of the enzyme (through the Met-33 residue), thereby preventing its breakdown. It has been called fasciculin since after injection into mice it causes severe, generalized and long-lasting (5-7 hours) fasciculations. The polypeptide is Fasciculin-2 (Dendroaspis angusticeps (Eastern green mamba)).